We begin with the raw amino-acid sequence, 168 residues long: Peptide deformylase 2 (168 aa).

Residues cysteine 91 and histidine 133 each contribute to the Fe cation site. Residue glutamate 134 is part of the active site. Histidine 137 provides a ligand contact to Fe cation.

The protein belongs to the polypeptide deformylase family. Fe(2+) is required as a cofactor.

The catalysed reaction is N-terminal N-formyl-L-methionyl-[peptide] + H2O = N-terminal L-methionyl-[peptide] + formate. Functionally, removes the formyl group from the N-terminal Met of newly synthesized proteins. Requires at least a dipeptide for an efficient rate of reaction. N-terminal L-methionine is a prerequisite for activity but the enzyme has broad specificity at other positions. This chain is Peptide deformylase 2, found in Vibrio cholerae serotype O1 (strain ATCC 39315 / El Tor Inaba N16961).